Consider the following 436-residue polypeptide: tRNA-2-methylthio-N(6)-dimethylallyladenosine synthase (436 aa).

The MTTase N-terminal domain maps to 5-120 (KKLFIQTLGC…IKDVVDVKGA (116 aa)). The [4Fe-4S] cluster site is built by Cys14, Cys51, Cys83, Cys152, Cys156, and Cys159. One can recognise a Radical SAM core domain in the interval 138–372 (KTNKYRASVN…IELHKRYLEE (235 aa)). One can recognise a TRAM domain in the interval 375-436 (PKLIGETLNI…RTSLKGEVVN (62 aa)).

It belongs to the methylthiotransferase family. MiaB subfamily. As to quaternary structure, monomer. The cofactor is [4Fe-4S] cluster.

It is found in the cytoplasm. It carries out the reaction N(6)-dimethylallyladenosine(37) in tRNA + (sulfur carrier)-SH + AH2 + 2 S-adenosyl-L-methionine = 2-methylsulfanyl-N(6)-dimethylallyladenosine(37) in tRNA + (sulfur carrier)-H + 5'-deoxyadenosine + L-methionine + A + S-adenosyl-L-homocysteine + 2 H(+). Catalyzes the methylthiolation of N6-(dimethylallyl)adenosine (i(6)A), leading to the formation of 2-methylthio-N6-(dimethylallyl)adenosine (ms(2)i(6)A) at position 37 in tRNAs that read codons beginning with uridine. This is tRNA-2-methylthio-N(6)-dimethylallyladenosine synthase from Aliarcobacter butzleri (strain RM4018) (Arcobacter butzleri).